Consider the following 90-residue polypeptide: Nodulation protein F (90 aa).

The region spanning 4 to 89 (QLESEIIGII…RHSGSHPRLA (86 aa)) is the Carrier domain. Position 46 is an O-(pantetheine 4'-phosphoryl)serine (S46). Residues 65-90 (RDEHGRGVVGSPERRRHSGSHPRLAH) are disordered. The segment covering 78–90 (RRRHSGSHPRLAH) has biased composition (basic residues).

Post-translationally, 4'-phosphopantetheine is transferred from CoA to a specific serine of apo-NodF.

In terms of biological role, proposed to synthesize nod factor fatty acyl chain. Involved in trans-2,trans-4,trans-6,cis-11-octadecatetraenoic acid biosynthesis. In Rhizobium meliloti (Ensifer meliloti), this protein is Nodulation protein F (nodF).